A 90-amino-acid chain; its full sequence is [Phe8]-phyllolitorin (90 aa).

A signal peptide spans 1 to 30 (MSAVPFTRVLLISGFLAHLLLSTFVTLTVC). Positions 31 to 48 (KEVTEESDDLSKRNVLQR) are excised as a propeptide. Gln-49 is modified (pyrrolidone carboxylic acid). Met-57 is modified (methionine amide). A propeptide spanning residues 61-90 (SLENTNRRSDEDMEISALFRGSPLKVKRSD) is cleaved from the precursor.

Belongs to the bombesin/neuromedin-B/ranatensin family. Expressed by the skin glands.

It is found in the secreted. This is [Phe8]-phyllolitorin from Phyllomedusa sauvagei (Sauvage's leaf frog).